The sequence spans 878 residues: DNA mismatch repair protein MutS (878 aa).

626 to 633 lines the ATP pocket; sequence GPNMAGKS.

The protein belongs to the DNA mismatch repair MutS family.

Functionally, this protein is involved in the repair of mismatches in DNA. It is possible that it carries out the mismatch recognition step. This protein has a weak ATPase activity. The polypeptide is DNA mismatch repair protein MutS (Paracoccus denitrificans (strain Pd 1222)).